We begin with the raw amino-acid sequence, 532 residues long: Cytochrome c oxidase subunit 1 (532 aa).

3 helical membrane passes run 1-21 (MWDY…AYAA), 27-47 (LPYM…LIWV), and 69-89 (GVIA…VIAF). Residue histidine 114 coordinates heme b. Transmembrane regions (helical) follow at residues 115–135 (TSAV…FYVV), 143–163 (LFGG…IIVT), 185–205 (LDIL…GTIF), 212–232 (IYVA…LHIV), 263–283 (GHNA…YYFV), 296–316 (LSIV…PHHL), 328–348 (LGMV…INGL), and 366–386 (MMVV…MMSI). Cu cation contacts are provided by histidine 264, histidine 314, and histidine 315. Histidine 402 and histidine 404 together coordinate heme b. The next 3 helical transmembrane spans lie at 403 to 423 (VHSG…YFLT), 442 to 462 (FWLA…TGIM), and 496 to 516 (VGGV…WATV).

Belongs to the heme-copper respiratory oxidase family. Requires Cu(2+) as cofactor. It depends on heme b as a cofactor.

It localises to the cell membrane. It carries out the reaction 4 Fe(II)-[cytochrome c] + O2 + 8 H(+)(in) = 4 Fe(III)-[cytochrome c] + 2 H2O + 4 H(+)(out). It functions in the pathway energy metabolism; oxidative phosphorylation. Functionally, cytochrome c oxidase is the component of the respiratory chain that catalyzes the reduction of oxygen to water. Subunits 1-3 form the functional core of the enzyme complex. Co I is the catalytic subunit of the enzyme. Electrons originating in cytochrome c are transferred via the copper A center of subunit 2 and heme a of subunit 1 to the bimetallic center formed by heme a3 and copper B. This cytochrome c oxidase shows proton pump activity across the membrane in addition to the electron transfer. The chain is Cytochrome c oxidase subunit 1 (ctaD) from Rhodobacter capsulatus (Rhodopseudomonas capsulata).